Consider the following 292-residue polypeptide: Acetyl-coenzyme A carboxylase carboxyl transferase subunit beta (292 aa).

One can recognise a CoA carboxyltransferase N-terminal domain in the interval 35 to 292; that stretch reads VFSQCEQCNS…LKLHAKKVTS (258 aa). Positions 39, 42, 58, and 61 each coordinate Zn(2+). The C4-type zinc-finger motif lies at 39–61; the sequence is CEQCNSAIYNKDLEHNYEVCPYC.

It belongs to the AccD/PCCB family. As to quaternary structure, acetyl-CoA carboxylase is a heterohexamer composed of biotin carboxyl carrier protein (AccB), biotin carboxylase (AccC) and two subunits each of ACCase subunit alpha (AccA) and ACCase subunit beta (AccD). Requires Zn(2+) as cofactor.

The protein resides in the cytoplasm. It catalyses the reaction N(6)-carboxybiotinyl-L-lysyl-[protein] + acetyl-CoA = N(6)-biotinyl-L-lysyl-[protein] + malonyl-CoA. It participates in lipid metabolism; malonyl-CoA biosynthesis; malonyl-CoA from acetyl-CoA: step 1/1. Functionally, component of the acetyl coenzyme A carboxylase (ACC) complex. Biotin carboxylase (BC) catalyzes the carboxylation of biotin on its carrier protein (BCCP) and then the CO(2) group is transferred by the transcarboxylase to acetyl-CoA to form malonyl-CoA. The protein is Acetyl-coenzyme A carboxylase carboxyl transferase subunit beta of Acholeplasma laidlawii (strain PG-8A).